A 139-amino-acid chain; its full sequence is uncharacterized protein (139 aa).

2 helical membrane-spanning segments follow: residues 35–55 (LVFLFVVFFSDCFFSITSFLI) and 57–77 (FGILSSFLIFSLFCLGFLTVI).

The protein localises to the membrane. This is an uncharacterized protein from Saccharomyces cerevisiae (strain ATCC 204508 / S288c) (Baker's yeast).